A 160-amino-acid polypeptide reads, in one-letter code: SsrA-binding protein (160 aa).

Belongs to the SmpB family.

It localises to the cytoplasm. Required for rescue of stalled ribosomes mediated by trans-translation. Binds to transfer-messenger RNA (tmRNA), required for stable association of tmRNA with ribosomes. tmRNA and SmpB together mimic tRNA shape, replacing the anticodon stem-loop with SmpB. tmRNA is encoded by the ssrA gene; the 2 termini fold to resemble tRNA(Ala) and it encodes a 'tag peptide', a short internal open reading frame. During trans-translation Ala-aminoacylated tmRNA acts like a tRNA, entering the A-site of stalled ribosomes, displacing the stalled mRNA. The ribosome then switches to translate the ORF on the tmRNA; the nascent peptide is terminated with the 'tag peptide' encoded by the tmRNA and targeted for degradation. The ribosome is freed to recommence translation, which seems to be the essential function of trans-translation. The sequence is that of SsrA-binding protein from Proteus mirabilis (strain HI4320).